The following is a 446-amino-acid chain: Tubulin gamma chain (446 aa).

Residue 142–148 (AGGTGSG) participates in GTP binding.

This sequence belongs to the tubulin family. In terms of assembly, interacts with mto1. Interacts with mto2.

It is found in the cytoplasm. Its subcellular location is the cytoskeleton. It localises to the microtubule organizing center. The protein resides in the spindle pole body. Functionally, tubulin is the major constituent of microtubules. The gamma chain is found at microtubule organizing centers (MTOC) such as the spindle poles or the centrosome, suggesting that it is involved in the minus-end nucleation of microtubule assembly. The chain is Tubulin gamma chain from Schizosaccharomyces pombe (strain 972 / ATCC 24843) (Fission yeast).